Here is a 344-residue protein sequence, read N- to C-terminus: tRNA N6-adenosine threonylcarbamoyltransferase (344 aa).

Fe cation contacts are provided by His-114 and His-118. Residues 136–140, Asp-170, Gly-183, Asp-187, and Asn-278 each bind substrate; that span reads LVSGG. Position 306 (Asp-306) interacts with Fe cation.

Belongs to the KAE1 / TsaD family. It depends on Fe(2+) as a cofactor.

Its subcellular location is the cytoplasm. It catalyses the reaction L-threonylcarbamoyladenylate + adenosine(37) in tRNA = N(6)-L-threonylcarbamoyladenosine(37) in tRNA + AMP + H(+). Required for the formation of a threonylcarbamoyl group on adenosine at position 37 (t(6)A37) in tRNAs that read codons beginning with adenine. Is involved in the transfer of the threonylcarbamoyl moiety of threonylcarbamoyl-AMP (TC-AMP) to the N6 group of A37, together with TsaE and TsaB. TsaD likely plays a direct catalytic role in this reaction. The protein is tRNA N6-adenosine threonylcarbamoyltransferase of Mycobacteroides abscessus (strain ATCC 19977 / DSM 44196 / CCUG 20993 / CIP 104536 / JCM 13569 / NCTC 13031 / TMC 1543 / L948) (Mycobacterium abscessus).